We begin with the raw amino-acid sequence, 382 residues long: MAFRNWIGAFGKANALDVNSDLDRGYEAALLIQSLELEYYGDRPIRPDLELSVPKSVQATVLRKFRVAINVCRASLDQLEYQRSQLDPQELRQLQLIESVVNRYSPKRVSTAPTMTRDPDPLPRSLLGVFDKVRRQLNPAGEATLVAGFRRRRDSTLISLKVLLLLILVPLLVQQVSRTYIISPAVDRFAPDLPFLSYPKPQLEEQAVEKLRVYKAEIEFDALLRGDTIPSQEELQQQLGKKASELKEEADAESTHAVKNVLADISATIAFVVVCLFSREELRVLRGFFDEAVYGLSDSAKAFAIILFTDIFVGFHSPEGWTVLLDGIANHFGFPARENFILLFIATFPVILATIFKYWIFRYLNRVSPSSVATLRGMNGGG.

4 helical membrane-spanning segments follow: residues threonine 156–valine 176, alanine 257–phenylalanine 277, isoleucine 305–leucine 325, and phenylalanine 340–isoleucine 360.

This sequence belongs to the CemA family.

The protein localises to the cell inner membrane. Required for H(+) efflux immediately after light irradiation to form a rapid H(+) concentration gradient across the thylakoid membranes. Together with PxcL, contributes to transient H(+) uptake following dark to light transition. This chain is Proton extrusion protein PxcA, found in Synechococcus sp. (strain CC9311).